Consider the following 559-residue polypeptide: Putative protease Do-like 3, mitochondrial (559 aa).

The transit peptide at 1-48 (MSFLCVRTVSRFRSLSRALAPGFLLLHGNAVPKTAVFFRQQSSNTRLF) directs the protein to the mitochondrion. The interval 59 to 81 (ENNSKSALKNKLPPGKEVSSKDA) is disordered. Residues 100-292 (VFTVSSKPRL…FLNAIEESGE (193 aa)) form a serine protease region. Residues H138, D169, and S247 each act as charge relay system in the active site. Positions 300 to 380 (NLTYQKMDND…HLVSMKKPCE (81 aa)) constitute a PDZ domain. Residues 538–559 (SEDLQPKQQNKRSKVPPKSKEH) are disordered. The span at 546–559 (QNKRSKVPPKSKEH) shows a compositional bias: basic residues.

This sequence belongs to the peptidase S1C family.

The protein localises to the mitochondrion matrix. Its function is as follows. Putative serine protease. In Arabidopsis thaliana (Mouse-ear cress), this protein is Putative protease Do-like 3, mitochondrial (DEGP3).